A 125-amino-acid chain; its full sequence is Small ribosomal subunit protein uS12 (125 aa).

The interval 1 to 28 is disordered; that stretch reads MPTINQLVRKGREKVKKKSKAPALEGNP. The span at 9–20 shows a compositional bias: basic residues; that stretch reads RKGREKVKKKSK. D89 carries the post-translational modification 3-methylthioaspartic acid. Residues 104–125 are disordered; sequence AAGVKDRKQSRSKYGTKRPKEK. The span at 113–125 shows a compositional bias: basic residues; it reads SRSKYGTKRPKEK.

This sequence belongs to the universal ribosomal protein uS12 family. As to quaternary structure, part of the 30S ribosomal subunit. Contacts proteins S8 and S17. May interact with IF1 in the 30S initiation complex.

With S4 and S5 plays an important role in translational accuracy. In terms of biological role, interacts with and stabilizes bases of the 16S rRNA that are involved in tRNA selection in the A site and with the mRNA backbone. Located at the interface of the 30S and 50S subunits, it traverses the body of the 30S subunit contacting proteins on the other side and probably holding the rRNA structure together. The combined cluster of proteins S8, S12 and S17 appears to hold together the shoulder and platform of the 30S subunit. This Persephonella marina (strain DSM 14350 / EX-H1) protein is Small ribosomal subunit protein uS12.